The following is a 113-amino-acid chain: Putative pterin-4-alpha-carbinolamine dehydratase (113 aa).

This sequence belongs to the pterin-4-alpha-carbinolamine dehydratase family.

The enzyme catalyses (4aS,6R)-4a-hydroxy-L-erythro-5,6,7,8-tetrahydrobiopterin = (6R)-L-erythro-6,7-dihydrobiopterin + H2O. In Nitrosomonas europaea (strain ATCC 19718 / CIP 103999 / KCTC 2705 / NBRC 14298), this protein is Putative pterin-4-alpha-carbinolamine dehydratase.